The sequence spans 466 residues: Asparagine--tRNA ligase (466 aa).

Belongs to the class-II aminoacyl-tRNA synthetase family. As to quaternary structure, homodimer.

The protein localises to the cytoplasm. The enzyme catalyses tRNA(Asn) + L-asparagine + ATP = L-asparaginyl-tRNA(Asn) + AMP + diphosphate + H(+). This Myxococcus xanthus (strain DK1622) protein is Asparagine--tRNA ligase.